The sequence spans 45 residues: Large ribosomal subunit protein bL34 (45 aa).

The protein belongs to the bacterial ribosomal protein bL34 family.

In Opitutus terrae (strain DSM 11246 / JCM 15787 / PB90-1), this protein is Large ribosomal subunit protein bL34.